We begin with the raw amino-acid sequence, 177 residues long: Anti-apoptotic protein NR13 (177 aa).

The BH1 motif lies at 75-94 (LETDGGLNWGRLLALVVFAG). A helical transmembrane segment spans residues 86 to 106 (LLALVVFAGTLAAALAESACE). A BH2 motif is present at residues 126–141 (EWMEEHGGWDGFCRFF). The helical transmembrane segment at 156–176 (SNAIMAAAGFGIAGLAFLLVV) threads the bilayer.

The protein belongs to the Bcl-2 family. As to quaternary structure, interacts with BAX. Mainly expressed in neural and muscular tissues.

It localises to the cell membrane. Functionally, shows anti-apoptotic properties. Counteract the pro-apoptotic activity of BAX. The protein is Anti-apoptotic protein NR13 (NR13) of Coturnix japonica (Japanese quail).